Consider the following 259-residue polypeptide: MLIVISPAKTLDFQSPLATRRYTQPELLPQSAALIDLCRKLTPARISTLMGISDKLADLNAARFQAWQTPFTPDNARQAILAFKGDVYTGLAAETFSEAQFDFAQRHLRMLSGLYGVLRPLDLMQPYRLEMGIRLANPAGASLYHYWGTMLTDKLNQALAEQGDTLVINLASDEYFRAVQPARINGRVIKPVFLDEKNGQYKVISFNAKKARGMMSRCIITEALTQPEQLKAFDAGGYRFDAAASSDNEWVFKRLQQDG.

It belongs to the UPF0246 family.

The polypeptide is UPF0246 protein SG0407 (Sodalis glossinidius (strain morsitans)).